The primary structure comprises 301 residues: Phosphatidylglycerol--prolipoprotein diacylglyceryl transferase (301 aa).

The next 4 membrane-spanning stretches (helical) occupy residues 10–30, 57–77, 92–112, and 119–139; these read IAFS…LAGF, LLFY…MLFY, VWEG…AVAW, and MHMF…LGFG. R140 lines the a 1,2-diacyl-sn-glycero-3-phospho-(1'-sn-glycerol) pocket. Transmembrane regions (helical) follow at residues 202 to 222, 230 to 250, and 264 to 284; these read PSQL…LWLF, YAVS…VEFV, and LTRG…LFWL.

It belongs to the Lgt family.

The protein localises to the cell inner membrane. It catalyses the reaction L-cysteinyl-[prolipoprotein] + a 1,2-diacyl-sn-glycero-3-phospho-(1'-sn-glycerol) = an S-1,2-diacyl-sn-glyceryl-L-cysteinyl-[prolipoprotein] + sn-glycerol 1-phosphate + H(+). Its pathway is protein modification; lipoprotein biosynthesis (diacylglyceryl transfer). In terms of biological role, catalyzes the transfer of the diacylglyceryl group from phosphatidylglycerol to the sulfhydryl group of the N-terminal cysteine of a prolipoprotein, the first step in the formation of mature lipoproteins. The chain is Phosphatidylglycerol--prolipoprotein diacylglyceryl transferase from Xylella fastidiosa (strain M23).